A 341-amino-acid polypeptide reads, in one-letter code: 5-formaminoimidazole-4-carboxamide-1-(beta)-D-ribofuranosyl 5'-monophosphate synthetase (341 aa).

Residues H10 and T77 each coordinate 5-amino-1-(5-phospho-beta-D-ribosyl)imidazole-4-carboxamide. The region spanning 106-317 (DRSLKERLMR…YYGLLFDEPI (212 aa)) is the ATP-grasp domain. ATP contacts are provided by residues 132–188 (DTLV…VLAY) and E210. N238 contributes to the 5-amino-1-(5-phospho-beta-D-ribosyl)imidazole-4-carboxamide binding site. Mg(2+)-binding residues include E277 and E290.

This sequence belongs to the phosphohexose mutase family. The cofactor is Mg(2+). Mn(2+) is required as a cofactor.

The catalysed reaction is 5-amino-1-(5-phospho-beta-D-ribosyl)imidazole-4-carboxamide + formate + ATP = 5-formamido-1-(5-phospho-D-ribosyl)imidazole-4-carboxamide + ADP + phosphate. The protein operates within purine metabolism; IMP biosynthesis via de novo pathway; 5-formamido-1-(5-phospho-D-ribosyl)imidazole-4-carboxamide from 5-amino-1-(5-phospho-D-ribosyl)imidazole-4-carboxamide (formate route): step 1/1. In terms of biological role, catalyzes the ATP- and formate-dependent formylation of 5-aminoimidazole-4-carboxamide-1-beta-d-ribofuranosyl 5'-monophosphate (AICAR) to 5-formaminoimidazole-4-carboxamide-1-beta-d-ribofuranosyl 5'-monophosphate (FAICAR) in the absence of folates. The protein is 5-formaminoimidazole-4-carboxamide-1-(beta)-D-ribofuranosyl 5'-monophosphate synthetase of Cenarchaeum symbiosum (strain A).